We begin with the raw amino-acid sequence, 304 residues long: Probable 5-dehydro-4-deoxyglucarate dehydratase (304 aa).

It belongs to the DapA family.

The catalysed reaction is 5-dehydro-4-deoxy-D-glucarate + H(+) = 2,5-dioxopentanoate + CO2 + H2O. It functions in the pathway carbohydrate acid metabolism; D-glucarate degradation; 2,5-dioxopentanoate from D-glucarate: step 2/2. The protein is Probable 5-dehydro-4-deoxyglucarate dehydratase of Methylobacterium radiotolerans (strain ATCC 27329 / DSM 1819 / JCM 2831 / NBRC 15690 / NCIMB 10815 / 0-1).